The primary structure comprises 458 residues: Retinoic acid receptor RXR-beta (458 aa).

A compositionally biased stretch (basic and acidic residues) spans 1 to 17 (GEAGRDGMGDTGRDSRS). Residues 1–105 (GEAGRDGMGD…GGSGPPEDVK (105 aa)) are disordered. The segment at 1–129 (GEAGRDGMGD…PGGPGAGKRL (129 aa)) is modulating. Positions 18–31 (PDSSSPNPLSQGIP) are enriched in low complexity. The segment covering 32 to 56 (PSSPPGPPHTPSAPPPPMPPPPLGS) has biased composition (pro residues). A compositionally biased stretch (low complexity) spans 57 to 68 (PFPVISSSMGSP). The segment covering 69–78 (GLPPPAPPGF) has biased composition (pro residues). NR C4-type zinc fingers lie at residues 130 to 150 (CAIC…CEGC) and 166 to 190 (CRDN…YQKC). The segment at residues 130-195 (CAICGDRSSG…RYQKCLATGM (66 aa)) is a DNA-binding region (nuclear receptor). The hinge stretch occupies residues 196-220 (KREAVQEERQRGKDKDGDGDGAGGA). The span at 201–213 (QEERQRGKDKDGD) shows a compositional bias: basic and acidic residues. Disordered stretches follow at residues 201-223 (QEER…APEE) and 238-261 (QKSD…NDPV). The NR LBD domain maps to 221 to 454 (PEEMPVDRIL…TFLMEMLEAP (234 aa)). Gly residues predominate over residues 245-255 (EGPGATGGGGS).

The protein belongs to the nuclear hormone receptor family. NR2 subfamily. In terms of assembly, homodimer (in vitro). Heterodimer with other retinoic acid receptor family members. Binds DNA preferentially as a RAR/RXR heterodimer. Interacts with NR1H3. Interacts with AKAP13. In terms of tissue distribution, expressed in the adrenal gland with main expression in the zona fasciculata (at protein level).

The protein resides in the nucleus. The protein localises to the cytoplasm. In terms of biological role, receptor for retinoic acid. Retinoic acid receptors bind as heterodimers to their target response elements in response to their ligands, all-trans or 9-cis retinoic acid, and regulate gene expression in various biological processes. The RAR/RXR heterodimers bind to the retinoic acid response elements (RARE). The protein is Retinoic acid receptor RXR-beta (Rxrb) of Rattus norvegicus (Rat).